Consider the following 592-residue polypeptide: Glycosyltransferase 25 family member (592 aa).

A signal peptide spans 1–13; it reads MLALLLTTTIVSG. N-linked (GlcNAc...) asparagine glycans are attached at residues asparagine 249 and asparagine 510. 2 stretches are compositionally biased toward basic and acidic residues: residues 552-563 and 579-592; these read RIQEPKKGDKEQ and GEHD…RSEL. The segment at 552–592 is disordered; that stretch reads RIQEPKKGDKEQLPNAPALLSESGIGQGEHDLETKNRRSEL. A Prevents secretion from ER motif is present at residues 589-592; it reads RSEL.

The protein belongs to the glycosyltransferase 25 family.

It localises to the endoplasmic reticulum lumen. The protein is Glycosyltransferase 25 family member of Anopheles gambiae (African malaria mosquito).